A 609-amino-acid polypeptide reads, in one-letter code: Arginine--tRNA ligase (609 aa).

Positions 132 to 142 (ANPTSSLHVGH) match the 'HIGH' region motif.

This sequence belongs to the class-I aminoacyl-tRNA synthetase family. In terms of assembly, monomer.

Its subcellular location is the cytoplasm. It carries out the reaction tRNA(Arg) + L-arginine + ATP = L-arginyl-tRNA(Arg) + AMP + diphosphate. In Psychrobacter sp. (strain PRwf-1), this protein is Arginine--tRNA ligase.